Here is a 146-residue protein sequence, read N- to C-terminus: Hemoglobin subunit beta (146 aa).

The 145-residue stretch at 2–146 folds into the Globin domain; sequence HWTAEEKQLI…VAHALARKYH (145 aa). Heme b is bound by residues histidine 63 and histidine 92.

The protein belongs to the globin family. In terms of assembly, heterotetramer of two alpha chains and two beta chains. In terms of tissue distribution, red blood cells.

Involved in oxygen transport from the lung to the various peripheral tissues. This Phalacrocorax carbo (Great cormorant) protein is Hemoglobin subunit beta (HBB).